Consider the following 379-residue polypeptide: tRNA-specific 2-thiouridylase MnmA (379 aa).

Residues 23–30 (AMSGGVDS) and L49 each bind ATP. The active-site Nucleophile is C117. A disulfide bond links C117 and C214. G141 is an ATP binding site. The tract at residues 163–165 (RDQ) is interaction with tRNA. The Cysteine persulfide intermediate role is filled by C214.

Belongs to the MnmA/TRMU family.

The protein resides in the cytoplasm. The enzyme catalyses S-sulfanyl-L-cysteinyl-[protein] + uridine(34) in tRNA + AH2 + ATP = 2-thiouridine(34) in tRNA + L-cysteinyl-[protein] + A + AMP + diphosphate + H(+). In terms of biological role, catalyzes the 2-thiolation of uridine at the wobble position (U34) of tRNA, leading to the formation of s(2)U34. In Cereibacter sphaeroides (strain ATCC 17023 / DSM 158 / JCM 6121 / CCUG 31486 / LMG 2827 / NBRC 12203 / NCIMB 8253 / ATH 2.4.1.) (Rhodobacter sphaeroides), this protein is tRNA-specific 2-thiouridylase MnmA.